Here is a 122-residue protein sequence, read N- to C-terminus: MIKKENRNWRRKKRHLSIRKKIHGTADRPRLCVYKSEKHIYAQIIDDDKGHTLVAASTLDKELRETLKKTWNKEAAREVGKLIGKRAIEKGIKKVVFDRGGYRYHGRVAELAEGAREAGLEF.

The protein belongs to the universal ribosomal protein uL18 family. As to quaternary structure, part of the 50S ribosomal subunit; part of the 5S rRNA/L5/L18/L25 subcomplex. Contacts the 5S and 23S rRNAs.

Functionally, this is one of the proteins that bind and probably mediate the attachment of the 5S RNA into the large ribosomal subunit, where it forms part of the central protuberance. This Thermosipho africanus (strain TCF52B) protein is Large ribosomal subunit protein uL18.